A 401-amino-acid chain; its full sequence is Jumonji C domain-containing protein 5 (401 aa).

In terms of domain architecture, JmjC spans 255–401 (EYLAQHELFA…PSFSVSFWWE (147 aa)). Positions 306, 308, and 385 each coordinate Fe cation.

Fe(2+) serves as cofactor. In terms of tissue distribution, expressed in neurons close to the dorsal lateral neurons involved in circadian rhythm.

The protein resides in the nucleus. It localises to the nucleoplasm. It is found in the cytoplasm. The enzyme catalyses L-arginyl-[protein] + 2-oxoglutarate + O2 = (3R)-3-hydroxy-L-arginyl-[protein] + succinate + CO2. Bifunctional enzyme that acts both as an endopeptidase and 2-oxoglutarate-dependent monooxygenase. May be involved in regulation of behavior and circadian rhythms. This is Jumonji C domain-containing protein 5 from Drosophila melanogaster (Fruit fly).